The sequence spans 68 residues: Alpha/kappa-conotoxin-like pl14.2 (68 aa).

The signal sequence occupies residues 1-27 (MPSVRSVTCCCLLWMMFSVQLVTPGSP). Positions 28 to 39 (ATAQLSGQRTAR) are excised as a propeptide. 2 cysteine pairs are disulfide-bonded: cysteine 46-cysteine 61 and cysteine 50-cysteine 63. The residue at position 64 (arginine 64) is an Arginine amide. Residues 65 to 68 (GKRD) constitute a propeptide that is removed on maturation.

It belongs to the conotoxin J superfamily. As to expression, expressed by the venom duct.

Its subcellular location is the secreted. Its function is as follows. Highly inhibits both nicotinic acetylcholine receptors (neuronal (alpha-3/beta-4) and muscular (alpha-1/beta-1/epsilon/delta) subtypes) and the voltage-gated potassium channel Kv1.6/KCNA6 subtype. The chain is Alpha/kappa-conotoxin-like pl14.2 from Conus planorbis (Planorbis cone).